The sequence spans 804 residues: Protein SEY1 homolog 1 (804 aa).

At 1-638 (MEQIITGEGQ…SVLASQNNEH (638 aa)) the chain is on the cytoplasmic side. The region spanning 28–245 (GTDYHMVSII…EENYLFKEKS (218 aa)) is the GB1/RHD3-type G domain. 38–45 (GCQSSGKS) is a binding site for GTP. Residues 639–659 (IPPWAWFLFLFSCSDYILWWL) form a helical membrane-spanning segment. Residues 660-662 (SNP) are Lumenal-facing. The chain crosses the membrane as a helical span at residues 663–683 (LLFSLTVLFGGTYLVLNQLGL). Topologically, residues 684-804 (WDTAVQKLLD…RKRVRVGTLV (121 aa)) are cytoplasmic. The disordered stretch occupies residues 706–804 (PDENNETETN…RKRVRVGTLV (99 aa)). A compositionally biased stretch (polar residues) spans 751–791 (QGLTKTESNVTFANVSNANDEQSLTKNNTEDSLNTGSSSSG). Basic residues predominate over residues 792–804 (QRHRKRVRVGTLV).

This sequence belongs to the TRAFAC class dynamin-like GTPase superfamily. GB1/RHD3 GTPase family. RHD3 subfamily.

The protein resides in the endoplasmic reticulum membrane. Probable GTP-binding protein that may be involved in cell development. The polypeptide is Protein SEY1 homolog 1 (Trichomonas vaginalis (strain ATCC PRA-98 / G3)).